The sequence spans 491 residues: Rab5 GDP/GTP exchange factor (491 aa).

The interaction with ubiquitinated proteins stretch occupies residues 1–74 (MSLKSERRGI…EEEAFASSQS (74 aa)). An A20-type zinc finger spans residues 13–47 (DQSDLLCKKGCGYYGNPAWQGFCSKCWREEYHKAR). Residues Cys-19, Cys-23, Cys-35, and Cys-38 each contribute to the Zn(2+) site. Residues 66–85 (EEAFASSQSSQGAQSLTFSK) form a disordered region. The segment covering 69-84 (FASSQSSQGAQSLTFS) has biased composition (low complexity). Phosphoserine is present on residues Ser-124 and Ser-132. N6-acetyllysine occurs at positions 151 and 170. The VPS9 domain occupies 232–375 (EKKDLAIQKR…IEKLDAQSLN (144 aa)). Ser-373, Ser-377, Ser-390, and Ser-400 each carry phosphoserine. The interval 462–491 (PPNQPLAAIDSENVENDKLPPPLQPQVYAG) is disordered.

As to quaternary structure, interacts with RGS14; the interaction is GTP-dependent. Heterodimer with RABEP1. The heterodimer binds RAB4A and RAB5A that have been activated by GTP-binding. Interacts with RAB21, and with 100-fold lower affinity also with RAB22. Binds TSC2, GGA1, GGA2, GGA3, AP1G1 and AP1G2. Interacts with ubiquitinated EGFR. Monoubiquitinated.

It is found in the cytoplasm. It localises to the early endosome. The protein localises to the recycling endosome. Its function is as follows. Rab effector protein acting as linker between gamma-adaptin, RAB4A or RAB5A. Involved in endocytic membrane fusion and membrane trafficking of recycling endosomes. Stimulates nucleotide exchange on RAB5A. Can act as a ubiquitin ligase. This chain is Rab5 GDP/GTP exchange factor (RABGEF1), found in Homo sapiens (Human).